The following is a 565-amino-acid chain: Adenine deaminase (565 aa).

This sequence belongs to the metallo-dependent hydrolases superfamily. Adenine deaminase family. The cofactor is Mn(2+).

It catalyses the reaction adenine + H2O + H(+) = hypoxanthine + NH4(+). The sequence is that of Adenine deaminase from Gluconobacter oxydans (strain 621H) (Gluconobacter suboxydans).